The primary structure comprises 359 residues: Norspermidine sensor (359 aa).

A signal peptide spans 1-33 (MTNFCNEWVSYSQMIKRFLSLMVLNTVCYQASA).

It belongs to the bacterial solute-binding protein PotD/PotF family.

The protein localises to the periplasm. In terms of biological role, acts as a sensor of norspermidine and enhances biofilm formation. When complexed to norspermidine, could interact with the periplasmic portion of MbaA to regulate its enzymatic activity. This chain is Norspermidine sensor (nspS), found in Vibrio cholerae serotype O1 (strain ATCC 39315 / El Tor Inaba N16961).